Here is a 297-residue protein sequence, read N- to C-terminus: 33 kDa chaperonin (297 aa).

Intrachain disulfides connect cysteine 232/cysteine 234 and cysteine 266/cysteine 269.

The protein belongs to the HSP33 family. In terms of processing, under oxidizing conditions two disulfide bonds are formed involving the reactive cysteines. Under reducing conditions zinc is bound to the reactive cysteines and the protein is inactive.

The protein localises to the cytoplasm. Its function is as follows. Redox regulated molecular chaperone. Protects both thermally unfolding and oxidatively damaged proteins from irreversible aggregation. Plays an important role in the bacterial defense system toward oxidative stress. The polypeptide is 33 kDa chaperonin (Pseudomonas aeruginosa (strain UCBPP-PA14)).